The chain runs to 156 residues: Small ribosomal subunit protein uS7 (156 aa).

Belongs to the universal ribosomal protein uS7 family. Part of the 30S ribosomal subunit. Contacts proteins S9 and S11.

Its function is as follows. One of the primary rRNA binding proteins, it binds directly to 16S rRNA where it nucleates assembly of the head domain of the 30S subunit. Is located at the subunit interface close to the decoding center, probably blocks exit of the E-site tRNA. The protein is Small ribosomal subunit protein uS7 of Methylocella silvestris (strain DSM 15510 / CIP 108128 / LMG 27833 / NCIMB 13906 / BL2).